The following is a 448-amino-acid chain: Antizyme inhibitor 1 (448 aa).

It belongs to the Orn/Lys/Arg decarboxylase class-II family. ODC antizyme inhibitor subfamily. As to quaternary structure, monomer. Interacts with OAZ1 and OAZ3; this interaction disrupts the interaction between the antizyme and ODC1. Ubiquitinated, leading to its proteasomal degradation; a process that is reduced in presence of antizyme OAZ1. Expressed in various tissues including liver, heart and kidney.

The protein resides in the nucleus. In terms of biological role, antizyme inhibitor (AZI) protein that positively regulates ornithine decarboxylase (ODC) activity and polyamine uptake. AZI is an enzymatically inactive ODC homolog that counteracts the negative effect of ODC antizymes (AZs) OAZ1, OAZ2 and OAZ3 on ODC activity by competing with ODC for antizyme-binding. Inhibits antizyme-dependent ODC degradation and releases ODC monomers from their inactive complex with antizymes, leading to formation of the catalytically active ODC homodimer and restoring polyamine production. The chain is Antizyme inhibitor 1 (Azin1) from Rattus norvegicus (Rat).